The primary structure comprises 317 residues: Transaldolase (317 aa).

The Schiff-base intermediate with substrate role is filled by lysine 126.

The protein belongs to the transaldolase family. Type 1 subfamily. As to quaternary structure, homodimer.

The protein localises to the cytoplasm. The enzyme catalyses D-sedoheptulose 7-phosphate + D-glyceraldehyde 3-phosphate = D-erythrose 4-phosphate + beta-D-fructose 6-phosphate. Its pathway is carbohydrate degradation; pentose phosphate pathway; D-glyceraldehyde 3-phosphate and beta-D-fructose 6-phosphate from D-ribose 5-phosphate and D-xylulose 5-phosphate (non-oxidative stage): step 2/3. Transaldolase is important for the balance of metabolites in the pentose-phosphate pathway. The protein is Transaldolase of Paraburkholderia xenovorans (strain LB400).